The following is a 292-amino-acid chain: Trimeric intracellular cation channel type B (292 aa).

Over 1–16 (MEYPWDDLTLAFSRTS) the chain is Lumenal. The chain crosses the membrane as a helical span at residues 17–34 (MFPFFDIAHYLVSVMALK). Over 35 to 47 (QRPGAVAAAWNNP) the chain is Cytoplasmic. A helical membrane pass occupies residues 48 to 69 (LASWLSAMLHCFGGGILSCMLL). At 70–82 (AESPLKFLTNHTN) the chain is on the lumenal side. The helical transmembrane segment at 83 to 100 (ILLASSIWYIVFFCPRDL) threads the bilayer. At 101 to 103 (VSQ) the chain is on the cytoplasmic side. Residues 104–122 (GYSYQPIQFLAAGMKEVTR) traverse the membrane as a helical segment. 2 residues coordinate a 1,2-diacyl-sn-glycero-3-phospho-(1D-myo-inositol-4,5-bisphosphate): Lys118 and Arg122. Residues 123–140 (TWKIVGGVSDANSYYRNA) are Lumenal-facing. The chain crosses the membrane as a helical span at residues 141–158 (WIVMIVVGWARGAGGAVV). The Cytoplasmic segment spans residues 159 to 178 (TACEQLLKGDWKPEGDEWLK). A helical membrane pass occupies residues 179–195 (MSFPCKITLLGSIMFTF). Over 196–206 (QHTRHLAISKH) the chain is Lumenal. The chain crosses the membrane as a helical span at residues 207 to 225 (DLMFLYTIFLVTIKVTMMM). Topologically, residues 226–292 (TKDTAVTLTP…GAKRHAKKED (67 aa)) are cytoplasmic. The interval 248-292 (RQQQQFSSSEKKTEVKPSSNGSASSASKRGAEPSGGAKRHAKKED) is disordered. Positions 265-274 (SSNGSASSAS) are enriched in low complexity.

This sequence belongs to the TMEM38 family. As to quaternary structure, homotrimer; conformation seems to be controled by binding to diacylglycerol (DAG). As to expression, widely expressed.

It is found in the endoplasmic reticulum membrane. It catalyses the reaction K(+)(in) = K(+)(out). Its activity is regulated as follows. Channel activity is activated by increased cytosolic Ca(2+) levels and blocked by luminal high Ca(2+) levels. Functionally, intracellular monovalent cation channel required for maintenance of rapid intracellular calcium release. Acts as a potassium counter-ion channel that functions in synchronization with calcium release from intracellular stores. Activated by increased cytosolic Ca(2+) levels. The polypeptide is Trimeric intracellular cation channel type B (Tmem38b) (Mus musculus (Mouse)).